The sequence spans 696 residues: Elongation factor G (696 aa).

One can recognise a tr-type G domain in the interval 8–282 (DRTRNIGIMA…AVIDYLPSPL (275 aa)). Residues 17-24 (AHIDAGKT), 81-85 (DTPGH), and 135-138 (NKMD) contribute to the GTP site.

It belongs to the TRAFAC class translation factor GTPase superfamily. Classic translation factor GTPase family. EF-G/EF-2 subfamily.

Its subcellular location is the cytoplasm. Functionally, catalyzes the GTP-dependent ribosomal translocation step during translation elongation. During this step, the ribosome changes from the pre-translocational (PRE) to the post-translocational (POST) state as the newly formed A-site-bound peptidyl-tRNA and P-site-bound deacylated tRNA move to the P and E sites, respectively. Catalyzes the coordinated movement of the two tRNA molecules, the mRNA and conformational changes in the ribosome. This Staphylococcus saprophyticus subsp. saprophyticus (strain ATCC 15305 / DSM 20229 / NCIMB 8711 / NCTC 7292 / S-41) protein is Elongation factor G.